Consider the following 271-residue polypeptide: Glutamate racemase (271 aa).

Residues 10 to 11 (DS) and 42 to 43 (YG) each bind substrate. C73 functions as the Proton donor/acceptor in the catalytic mechanism. Residue 74–75 (NT) coordinates substrate. The Proton donor/acceptor role is filled by C183. 184–185 (TH) serves as a coordination point for substrate.

The protein belongs to the aspartate/glutamate racemases family.

It catalyses the reaction L-glutamate = D-glutamate. It functions in the pathway cell wall biogenesis; peptidoglycan biosynthesis. In terms of biological role, provides the (R)-glutamate required for cell wall biosynthesis. The sequence is that of Glutamate racemase from Streptococcus thermophilus (strain ATCC BAA-250 / LMG 18311).